A 465-amino-acid polypeptide reads, in one-letter code: FAD-dependent oxidoreductase pigF (465 aa).

The first 17 residues, 1–17 (MMLLTLLILSSVGLAAA), serve as a signal peptide directing secretion. N-linked (GlcNAc...) asparagine glycans are attached at residues N95, N138, N260, and N327. A lipid anchor (GPI-anchor amidated aspartate) is attached at D444. Residues 445–465 (SASGIWNLTNAVVLPGLLTGL) constitute a propeptide, removed in mature form. A glycan (N-linked (GlcNAc...) asparagine) is linked at N451.

Belongs to the beta-cyclopiazonate dehydrogenase family. FAD serves as cofactor.

Its subcellular location is the cell membrane. Its pathway is secondary metabolite biosynthesis. FAD-dependent oxidoreductase; part of the gene cluster that mediates the biosynthesis of azaphilone pigments (MonAzPs), a complex mixture of compounds with a common azaphilone skeleton very widely used as food colorants. Within the pathway, pigF desaturates C6(7) to afford the orange and red pigments from yellow pigments. The first step of the pathway is performed by the nrPKS pigA that forms the hexaketide precursor from successive condensations of five malonyl-CoA units, with a simple acetyl-CoA starter unit. The role of esterase pigG is not clear, but it may play at most a supplementary role in the formation of the benzaldehyde produced by the pigA nrPKS. This very reactive benzaldehyde is intercepted by the pigC ketoreductase that to provide the first stable enzyme-free MonAzPs intermediate, 6-(4-hydroxy-2-oxopentyl)-3-methyl-2,4-dioxocyclohexane carbaldehyde, also known as M7PKS-1. The FAD-dependent monooxygenase pigN hydroxylates M7PKS-1 at C-4, which triggers the formation of the pyran ring. PigJ, pigK and pigD are involved in the acetylation of the pyran ring. PigJ and pigK form the two subunits of a dedicated fungal FAS that produces the side chain fatty acyl moiety of MonAzPs and pigD transfers the fatty acyl chain to the C-4 alcohol. PigM and pigO are involved in the elimination of the omega-1 alcohol. PigM acts as an O-acetyltransferase that synthesizes the putative O-11 acetyl intermediate whereas pigO eliminates acetic acid to yield an intermediate with a C10(11) double bond. The dehydration of the C-11 alcohol followed by the reduction of the C6(7) double bond by the NAD(P)H-dependent oxidoreductase pigE increases the electrophilicity of the C-5 ketone of the resulting acyl benzopyran. This in turn sets up the C-5 ketone for an intramolecular Knoevenagel aldol condensation with the C-20 enol of the side chain. This condensation affords the characteristic linear tricyclic carbon skeletons of the yellow pigments that serve as the common precursors for the classical yellow pigments monascin and ankaflavin, orange pigments rubopunctatin and monascorubrin, and red pigments ribropunctamine and monascorubramine. The FAD-dependent oxidoreductase pigF is especially invoved in the biosynthesis of orange and red pigments via desaturation of C6(7). This chain is FAD-dependent oxidoreductase pigF, found in Monascus ruber (Mold).